A 104-amino-acid polypeptide reads, in one-letter code: Circadian clock oscillator protein KaiB (104 aa).

Belongs to the KaiB family. As to quaternary structure, the KaiABC complex composition changes during the circadian cycle to control KaiC phosphorylation. Complexes KaiC(6), KaiA(2-4):KaiC(6), KaiB(6):KaiC(6) and KaiC(6):KaiB(6):KaiA(12) are among the most important forms, many form cooperatively. Undergoes a major conformational rearrangment; in the free state forms homotetramers as a dimer of dimers. When bound to the CI domain of KaiC switches to a monomeric thioredoxin-fold (KaiB(fs)). KaiB(fs) binds CikA, leading it to dephosphorylate phospho-RpaA.

In terms of biological role, key component of the KaiABC oscillator complex, which constitutes the main circadian regulator in cyanobacteria. Complex composition changes during the circadian cycle to control KaiC phosphorylation. KaiA stimulates KaiC autophosphorylation, while KaiB sequesters KaiA, leading to KaiC autodephosphorylation. Phospho-Ser-431 KaiC accumulation triggers binding of KaiB to form the KaiB(6):KaiC(6) complex, leading to changes in output regulators CikA and SasA. KaiB switches to a thioredoxin-like fold (KaiB(fs)) when bound to KaiC. KaiB(6):KaiC(6) formation exposes a site for KaiA binding that sequesters KaiA from KaiC, making the KaiC(6):KaiB(6):KaiA(12) complex that results in KaiC autodephosphorylation. Functionally, a metamorphic protein which reversibly switches between an inactive tetrameric fold and a rare, thioredoxin-like monomeric fold (KaiB(fs)). KaiB(fs) binds phospho-KaiC, KaiA and CikA. KaiA and CikA compete for binding to KaiB(fs), and KaiB(fs) and SasA compete for binding to KaiC, thus the clock oscillator and output signal pathway are tightly coupled. The chain is Circadian clock oscillator protein KaiB from Microcystis aeruginosa (strain NIES-843 / IAM M-2473).